Reading from the N-terminus, the 370-residue chain is Phospho-N-acetylmuramoyl-pentapeptide-transferase (370 aa).

11 consecutive transmembrane segments (helical) span residues 21 to 41, 46 to 66, 92 to 112, 117 to 137, 151 to 171, 181 to 201, 217 to 237, 243 to 263, 270 to 290, 298 to 318, and 349 to 369; these read PTSI…DLFI, LLVP…WGII, PSMG…LFAL, FSKQ…IGLI, LSVK…LVLI, ILIF…IALF, DGLA…ELII, NYAI…FLIF, VFMG…VALL, LIMG…VGVF, and TIIV…AIML.

The protein belongs to the glycosyltransferase 4 family. MraY subfamily. Requires Mg(2+) as cofactor.

It localises to the cell inner membrane. It catalyses the reaction UDP-N-acetyl-alpha-D-muramoyl-L-alanyl-gamma-D-glutamyl-meso-2,6-diaminopimeloyl-D-alanyl-D-alanine + di-trans,octa-cis-undecaprenyl phosphate = di-trans,octa-cis-undecaprenyl diphospho-N-acetyl-alpha-D-muramoyl-L-alanyl-D-glutamyl-meso-2,6-diaminopimeloyl-D-alanyl-D-alanine + UMP. It participates in cell wall biogenesis; peptidoglycan biosynthesis. Catalyzes the initial step of the lipid cycle reactions in the biosynthesis of the cell wall peptidoglycan: transfers peptidoglycan precursor phospho-MurNAc-pentapeptide from UDP-MurNAc-pentapeptide onto the lipid carrier undecaprenyl phosphate, yielding undecaprenyl-pyrophosphoryl-MurNAc-pentapeptide, known as lipid I. This is Phospho-N-acetylmuramoyl-pentapeptide-transferase from Prochlorococcus marinus (strain SARG / CCMP1375 / SS120).